Here is a 374-residue protein sequence, read N- to C-terminus: Alanine racemase (374 aa).

Catalysis depends on Lys-34, which acts as the Proton acceptor; specific for D-alanine. Lys-34 is subject to N6-(pyridoxal phosphate)lysine. A substrate-binding site is contributed by Arg-147. Tyr-271 acts as the Proton acceptor; specific for L-alanine in catalysis. Met-319 serves as a coordination point for substrate.

Belongs to the alanine racemase family. Pyridoxal 5'-phosphate serves as cofactor.

It carries out the reaction L-alanine = D-alanine. Its pathway is amino-acid biosynthesis; D-alanine biosynthesis; D-alanine from L-alanine: step 1/1. Catalyzes the interconversion of L-alanine and D-alanine. May also act on other amino acids. The protein is Alanine racemase (alr) of Haemophilus ducreyi (strain 35000HP / ATCC 700724).